Consider the following 104-residue polypeptide: MGKESGWDSGRAAVAAVVGGVVAVGTVLVALSAMGFTSVGIAASSIAAKMMSTAAIANGGGVAAGSLVAILQSVGAAGLSVTSKVIGGFAGTALGAWLGSPPSS.

A run of 3 helical transmembrane segments spans residues 14 to 34, 59 to 79, and 81 to 101; these read VAAV…LSAM, GGGV…AAGL, and VTSK…LGSP.

It belongs to the IFI6/IFI27 family.

The protein localises to the membrane. Plays a role in the apoptotic process and has a pro-apoptotic activity. In Homo sapiens (Human), this protein is Interferon alpha-inducible protein 27-like protein 1.